Consider the following 243-residue polypeptide: Carboxy-S-adenosyl-L-methionine synthase (243 aa).

S-adenosyl-L-methionine-binding positions include Y40, 65-67, 90-91, 118-119, N133, and R200; these read GCS, DN, and DI.

Belongs to the class I-like SAM-binding methyltransferase superfamily. Cx-SAM synthase family. Homodimer.

It catalyses the reaction prephenate + S-adenosyl-L-methionine = carboxy-S-adenosyl-L-methionine + 3-phenylpyruvate + H2O. Its function is as follows. Catalyzes the conversion of S-adenosyl-L-methionine (SAM) to carboxy-S-adenosyl-L-methionine (Cx-SAM). The chain is Carboxy-S-adenosyl-L-methionine synthase from Shewanella baltica (strain OS155 / ATCC BAA-1091).